Reading from the N-terminus, the 82-residue chain is Small ribosomal subunit protein eS21 (82 aa).

It belongs to the eukaryotic ribosomal protein eS21 family.

This is Small ribosomal subunit protein eS21 (RPS21) from Oryza sativa subsp. japonica (Rice).